A 119-amino-acid chain; its full sequence is MKNIAYEGRLFLISAVQFMPDATAMGFGEIIDQATGKRKLPGWPSADDNCINGGSVIIDPYGEIIAGPLLGQEGLLTAEINTDLIAEARFDLDPVGHYARGDVFQLTVNERSHDVKFTK.

The CN hydrolase domain maps to Met-1 to Thr-82. Asp-21 functions as the Proton acceptor in the catalytic mechanism.

It belongs to the carbon-nitrogen hydrolase superfamily. Nitrilase family.

This is Putative nitrilase-like protein YIL165C from Saccharomyces cerevisiae (strain ATCC 204508 / S288c) (Baker's yeast).